A 291-amino-acid chain; its full sequence is Transcription antitermination protein NusB (291 aa).

The protein belongs to the NusB family.

Involved in transcription antitermination. Required for transcription of ribosomal RNA (rRNA) genes. Binds specifically to the boxA antiterminator sequence of the ribosomal RNA (rrn) operons. The sequence is that of Transcription antitermination protein NusB from Synechococcus sp. (strain JA-2-3B'a(2-13)) (Cyanobacteria bacterium Yellowstone B-Prime).